A 352-amino-acid chain; its full sequence is MDDNKAKALKAALAQIEKQFGKNTIMHLGDNSATLDVDVVSTGSLGLDIALGIGGLPKGRIVEIYGPESSGKTTMTLQAIAACQKQGGVCAFIDAEHALDPVYARKLGVNTDDLLLSQPDNGEQALEITDMLVRSGAIDMIVIDSVAALTPRAEIEGEMGDSHMGLQARLMSQALRKITGNAKRSNCMVLFINQIRMKIGVMFGSPETTTGGNALKFYASVRMDIRRIGAVKNGDEIIGNQTRVKVIKNKMAPPFRQAEFEITYGEGTNHLAEVIDLGVEIGAVGKAGSWYSYGDEKIGQGKANSVLFLKENPAIAEEIEAKIRAEKLGTKDDSKVATVDKANEEQAAEPVQ.

66–73 (GPESSGKT) is a binding site for ATP. The segment at 330–352 (TKDDSKVATVDKANEEQAAEPVQ) is disordered.

This sequence belongs to the RecA family.

It localises to the cytoplasm. In terms of biological role, can catalyze the hydrolysis of ATP in the presence of single-stranded DNA, the ATP-dependent uptake of single-stranded DNA by duplex DNA, and the ATP-dependent hybridization of homologous single-stranded DNAs. It interacts with LexA causing its activation and leading to its autocatalytic cleavage. The protein is Protein RecA of Psychrobacter cryohalolentis (strain ATCC BAA-1226 / DSM 17306 / VKM B-2378 / K5).